Consider the following 106-residue polypeptide: ATP-dependent Clp protease adapter protein ClpS (106 aa).

Belongs to the ClpS family. Binds to the N-terminal domain of the chaperone ClpA.

In terms of biological role, involved in the modulation of the specificity of the ClpAP-mediated ATP-dependent protein degradation. The chain is ATP-dependent Clp protease adapter protein ClpS from Vibrio vulnificus (strain CMCP6).